The primary structure comprises 199 residues: Ras-related protein Rab-7b (199 aa).

Residues 15–22 (GAIGVGKT), 34–40 (YEEYQTT), 63–67 (DTGGQ), 124–127 (NKID), and 154–155 (AK) each bind GTP. 2 consecutive short sequence motifs (switch) follow at residues 28–41 (YVHK…QTTL) and 67–82 (QERF…KGSD). Ser-186 bears the Phosphoserine mark. 2 S-geranylgeranyl cysteine lipidation sites follow: Cys-198 and Cys-199.

This sequence belongs to the small GTPase superfamily. Rab family. As to expression, expressed in heart, placenta, lung, skeletal muscle and peripheral blood leukocyte.

It is found in the late endosome. The protein localises to the lysosome. It localises to the golgi apparatus. Its subcellular location is the trans-Golgi network. The protein resides in the cytoplasmic vesicle. It is found in the phagosome. The protein localises to the phagosome membrane. Functionally, controls vesicular trafficking from endosomes to the trans-Golgi network (TGN). Acts as a negative regulator of TLR9 signaling and can suppress TLR9-triggered TNFA, IL6, and IFNB production in macrophages by promoting TLR9 lysosomal degradation. Also negatively regulates TLR4 signaling in macrophages by promoting lysosomal degradation of TLR4. Promotes megakaryocytic differentiation by increasing NF-kappa-B-dependent IL6 production and subsequently enhancing the association of STAT3 with GATA1. Not involved in the regulation of the EGF- and EGFR degradation pathway. The protein is Ras-related protein Rab-7b (RAB7B) of Homo sapiens (Human).